A 295-amino-acid chain; its full sequence is Aquaporin-9 (295 aa).

The Cytoplasmic portion of the chain corresponds to 1-24 (MPSEKDGAKKSLMQRLALKSRIAK). A helical transmembrane segment spans residues 25–43 (ETLSEFLGTFIMIVLGCSS). The Extracellular portion of the chain corresponds to 44-57 (IAQAVLSRERFGGI). A helical transmembrane segment spans residues 58-77 (ITINIGFASAVVMALYVTFG). Topologically, residues 78 to 79 (IS) are cytoplasmic. An intramembrane region (discontinuously helical) is located at residues 80 to 92 (GGHINPAVSFAMC). The NPA 1 signature appears at 84 to 86 (NPA). The Cytoplasmic portion of the chain corresponds to 93–98 (AFGRME). The chain crosses the membrane as a helical span at residues 99–123 (WFKFPFYVGAQFLGAFVGAATVFGI). Over 124–160 (YYDGLMAFAGGKLLVVGENATAFIFATYPAPFISTPG) the chain is Extracellular. A helical membrane pass occupies residues 161-178 (AFVDQVVSTMFLLLIVFA). Over 179 to 190 (MFDSRNLGVPRG) the chain is Cytoplasmic. A helical transmembrane segment spans residues 191 to 207 (LEPVVIGLLIIVLSCSL). Over 208-210 (GLN) the chain is Extracellular. An intramembrane region (discontinuously helical) is located at residues 211–225 (SGCAMNPARDLSPRL). The NPA 2 motif lies at 216–218 (NPA). Topologically, residues 226–243 (FTALAGWGFEVFTVGNNF) are extracellular. The chain crosses the membrane as a helical span at residues 244–264 (WWIPVVGPMIGAFLGGLIYIL). Residues 265–295 (FIQMHHSKLDPDMKAEPSENNLEKHELSVIM) are Cytoplasmic-facing.

It belongs to the MIP/aquaporin (TC 1.A.8) family. As to quaternary structure, homotetramer; each monomer provides an independent glycerol/water pore. In terms of tissue distribution, detected in testis and liver. Detected in immature spermatocytes and in interstitial Leydig cells.

It localises to the cell membrane. Its subcellular location is the basolateral cell membrane. It catalyses the reaction H2O(in) = H2O(out). The enzyme catalyses glycerol(in) = glycerol(out). It carries out the reaction urea(in) = urea(out). The catalysed reaction is (S)-lactate(in) = (S)-lactate(out). It catalyses the reaction NH4(+)(in) = NH4(+)(out). The enzyme catalyses uracil(in) = uracil(out). It carries out the reaction adenine(out) = adenine(in). The catalysed reaction is 3-hydroxybutanoate(in) = 3-hydroxybutanoate(out). It catalyses the reaction D-sorbitol(in) = D-sorbitol(out). The enzyme catalyses D-mannitol(in) = D-mannitol(out). It carries out the reaction H2O2(out) = H2O2(in). The catalysed reaction is arsenite(in) = arsenite(out). It catalyses the reaction selenite(in) = selenite(out). With respect to regulation, channel activity is inhibited by mercury ions and phloretin. Its function is as follows. Aquaglyceroporins form homotetrameric transmembrane channels, with each monomer independently mediating glycerol and water transport across the plasma membrane along their osmotic gradient. AQP9 is the primary route for glycerol uptake in hepatocytes, supporting hepatic gluconeogenesis. It exhibits broad specificity and may transport various small, non-charged solutes, including carbamides, polyols, purines, and pyrimidines. AQP9 may also facilitate hepatic urea extrusion. Due to its permeability to lactate, AQP9 might participate in the astrocyte-to-neuron lactate shuttle, supplying neurons with energy. Additionally, AQP9 is permeable to arsenite, contributing to arsenic excretion by the liver and providing partial protection against arsenic toxicity. It is also permeable to H2O2 in vivo. Could also be permeable to ammonium. In Rattus norvegicus (Rat), this protein is Aquaporin-9.